The sequence spans 863 residues: Leucine--tRNA ligase (863 aa).

Positions 42-52 (PYPSGKIHMGH) match the 'HIGH' region motif. Positions 618–622 (KMSKS) match the 'KMSKS' region motif. Residue lysine 621 coordinates ATP.

This sequence belongs to the class-I aminoacyl-tRNA synthetase family.

It localises to the cytoplasm. It carries out the reaction tRNA(Leu) + L-leucine + ATP = L-leucyl-tRNA(Leu) + AMP + diphosphate. The polypeptide is Leucine--tRNA ligase (Desulforapulum autotrophicum (strain ATCC 43914 / DSM 3382 / VKM B-1955 / HRM2) (Desulfobacterium autotrophicum)).